The chain runs to 520 residues: TnpB-like protein L770 (520 aa).

The segment at 23 to 44 (KTKKKVFVKKKPPDKKPLKKPV) is disordered. The Zn(2+) site is built by C474, C477, C491, and C494.

The protein in the central section; belongs to the transposase 2 family. This sequence in the C-terminal section; belongs to the transposase 35 family.

The protein is TnpB-like protein L770 of Acanthamoeba polyphaga mimivirus (APMV).